The primary structure comprises 321 residues: Methionyl-tRNA formyltransferase (321 aa).

113 to 116 (SILP) lines the (6S)-5,6,7,8-tetrahydrofolate pocket.

The protein belongs to the Fmt family.

The enzyme catalyses L-methionyl-tRNA(fMet) + (6R)-10-formyltetrahydrofolate = N-formyl-L-methionyl-tRNA(fMet) + (6S)-5,6,7,8-tetrahydrofolate + H(+). Its function is as follows. Attaches a formyl group to the free amino group of methionyl-tRNA(fMet). The formyl group appears to play a dual role in the initiator identity of N-formylmethionyl-tRNA by promoting its recognition by IF2 and preventing the misappropriation of this tRNA by the elongation apparatus. The polypeptide is Methionyl-tRNA formyltransferase (Vibrio atlanticus (strain LGP32) (Vibrio splendidus (strain Mel32))).